Reading from the N-terminus, the 243-residue chain is MSMLCYTLIIAFLIGIWAAPKSEDNVPLGSPATSDLSDTSCAQTHEGLKTSRNTDQRHPAPKKAEDQELGSAANIIVDPKLFQKRRFQSPRVLFSTQPPPLSRDEQSVEFLDNEDTLNRNIRAKRETHPVHNRGEYSVCDSISVWVANKTKAMDIKGKPVTVMVDVNLNNHVYKQYFFETKCRNPNPVPSGCRGIDSRHWNSYCTTTHTFVKALTMEGNRASWRFIRIDTACVCVISRKTENF.

An N-terminal signal peptide occupies residues 1-18; the sequence is MSMLCYTLIIAFLIGIWA. Residues 19–125 constitute a propeptide that is removed on maturation; that stretch reads APKSEDNVPL…TLNRNIRAKR (107 aa). The segment covering 47–66 has biased composition (basic and acidic residues); that stretch reads GLKTSRNTDQRHPAPKKAED. The tract at residues 47–69 is disordered; the sequence is GLKTSRNTDQRHPAPKKAEDQEL. Disulfide bonds link C139/C204, C182/C232, and C192/C234. N148 carries an N-linked (GlcNAc...) asparagine glycan.

This sequence belongs to the NGF-beta family. In terms of assembly, homodimer; non-covalently linked. Expressed by the venom gland.

It localises to the secreted. Functionally, nerve growth factor is important for the development and maintenance of the sympathetic and sensory nervous systems. It stimulates division and differentiation of sympathetic and embryonic sensory neurons as well as basal forebrain cholinergic neurons in the brain. Its relevance in the snake venom is not clear. However, it has been shown to inhibit metalloproteinase-dependent proteolysis of platelet glycoprotein Ib alpha, suggesting a metalloproteinase inhibition to prevent metalloprotease autodigestion and/or protection against prey proteases. Binds a lipid between the two protein chains in the homodimer. The lipid-bound form promotes histamine relase from mouse mast cells, contrary to the lipid-free form. The chain is Venom nerve growth factor 1 from Pseudonaja textilis (Eastern brown snake).